The following is a 336-amino-acid chain: Galectin-12 (336 aa).

2 Galectin domains span residues tyrosine 49 to leucine 183 and cysteine 212 to serine 336.

In terms of tissue distribution, not widely expressed. Predominantly expressed in adipose tissue.

Its subcellular location is the nucleus. In terms of biological role, binds lactose. May participate in the apoptosis of adipocytes. This chain is Galectin-12 (LGALS12), found in Homo sapiens (Human).